Consider the following 422-residue polypeptide: Serine protease HTRA2, mitochondrial (422 aa).

Residues 1-17 constitute a mitochondrion transit peptide; that stretch reads MALRGCHRLEVIFKRCI. The propeptide occupies 18-74; the sequence is ASPVLHSQAGNRRSSQLAIKGVDPNSNGNSGQYQQNGEHKEKGWRRLVRFFVPFSLG. The interval 33–55 is disordered; sequence QLAIKGVDPNSNGNSGQYQQNGE. A compositionally biased stretch (low complexity) spans 42 to 53; sequence NSNGNSGQYQQN. Residues 64-82 form a helical membrane-spanning segment; that stretch reads LVRFFVPFSLGAAVSAAII. 2 short sequence motifs (IAP-binding) span residues 75-78 and 94-97; these read AAVS and SKMT. The segment at 139 to 302 is serine protease; that stretch reads SNGSGFIIEQ…IPIDYVKVFL (164 aa). Residues histidine 157, aspartate 189, and serine 266 each act as charge relay system in the active site. One can recognise a PDZ domain in the interval 325 to 410; it reads MGITMLTLTP…TLDIVILRGV (86 aa).

It belongs to the peptidase S1C family. In terms of assembly, interacts with th/DIAP1 (via BIR 2 domain).

The protein localises to the mitochondrion intermembrane space. It is found in the mitochondrion membrane. The catalysed reaction is Cleavage of non-polar aliphatic amino-acids at the P1 position, with a preference for Val, Ile and Met. At the P2 and P3 positions, Arg is selected most strongly with a secondary preference for other hydrophilic residues.. Functionally, serine protease that shows proteolytic activity against a non-specific substrate beta-casein. Promotes or induces cell death either by direct binding to and inhibition of BIRC proteins (also called inhibitor of apoptosis proteins, IAPs), leading to an increase in caspase activity, or by a BIRC inhibition-independent, caspase-independent and serine protease activity-dependent mechanism. Can antagonize antiapoptotic activity of th/Diap1 by directly inducing the degradation of th/Diap1. This Drosophila simulans (Fruit fly) protein is Serine protease HTRA2, mitochondrial.